The primary structure comprises 498 residues: Cytochrome P450 71B5 (498 aa).

A helical membrane pass occupies residues 3 to 23 (IFLCFLLLLPLSLIFLKKLLP). Cys-439 is a heme binding site.

The protein belongs to the cytochrome P450 family. The cofactor is heme.

The protein localises to the membrane. This Arabidopsis thaliana (Mouse-ear cress) protein is Cytochrome P450 71B5 (CYP71B5).